A 179-amino-acid polypeptide reads, in one-letter code: Signal peptidase complex catalytic subunit SEC11A (179 aa).

Residues 1-16 (MLSLDFLDDVRRMNKR) lie on the Cytoplasmic side of the membrane. Residues 17–36 (QLYYQVLNFGMIVSSALMIW) form a helical; Signal-anchor for type II membrane protein membrane-spanning segment. Topologically, residues 37–179 (KGLMVITGSE…LGLFVLVHRE (143 aa)) are lumenal. Residues serine 56, histidine 96, and aspartate 122 each act as charge relay system in the active site. Residues 165–176 (AVLFLLGLFVLV) form a C-terminal short (CTS) helix region.

This sequence belongs to the peptidase S26B family. In terms of assembly, component of the signal peptidase complex paralog A (SPC-A) composed of a catalytic subunit SEC11A and three accessory subunits SPCS1, SPCS2 and SPCS3. Within the complex, interacts with SPCS2 and SPCS3. The complex induces a local thinning of the ER membrane which is used to measure the length of the signal peptide (SP) h-region of protein substrates. This ensures the selectivity of the complex towards h-regions shorter than 18-20 amino acids.

The protein localises to the endoplasmic reticulum membrane. It carries out the reaction Cleavage of hydrophobic, N-terminal signal or leader sequences from secreted and periplasmic proteins.. Catalytic component of the signal peptidase complex (SPC) which catalyzes the cleavage of N-terminal signal sequences from nascent proteins as they are translocated into the lumen of the endoplasmic reticulum. Specifically cleaves N-terminal signal peptides that contain a hydrophobic alpha-helix (h-region) shorter than 18-20 amino acids. The protein is Signal peptidase complex catalytic subunit SEC11A (SEC11A) of Bos taurus (Bovine).